The sequence spans 387 residues: S-adenosylmethionine synthase (387 aa).

His-15 provides a ligand contact to ATP. Residue Asp-17 participates in Mg(2+) binding. Position 43 (Glu-43) interacts with K(+). L-methionine-binding residues include Glu-56 and Gln-99. The tract at residues 99–109 (QSPDIAQGVNN) is flexible loop. ATP is bound by residues 166–168 (DAK), 232–233 (RF), Asp-241, 247–248 (RK), Ala-264, and Lys-268. Asp-241 provides a ligand contact to L-methionine. Residue Lys-272 participates in L-methionine binding.

The protein belongs to the AdoMet synthase family. Homotetramer; dimer of dimers. It depends on Mg(2+) as a cofactor. Requires K(+) as cofactor.

It is found in the cytoplasm. It catalyses the reaction L-methionine + ATP + H2O = S-adenosyl-L-methionine + phosphate + diphosphate. Its pathway is amino-acid biosynthesis; S-adenosyl-L-methionine biosynthesis; S-adenosyl-L-methionine from L-methionine: step 1/1. Catalyzes the formation of S-adenosylmethionine (AdoMet) from methionine and ATP. The overall synthetic reaction is composed of two sequential steps, AdoMet formation and the subsequent tripolyphosphate hydrolysis which occurs prior to release of AdoMet from the enzyme. This is S-adenosylmethionine synthase from Methylobacillus flagellatus (strain ATCC 51484 / DSM 6875 / VKM B-1610 / KT).